The chain runs to 411 residues: Glutamate dehydrogenase 2, mitochondrial (411 aa).

The N-terminal 18 residues, 1–18 (MNALAATSRNFRQAARLL), are a transit peptide targeting the mitochondrion. Residue K102 is part of the active site.

It belongs to the Glu/Leu/Phe/Val dehydrogenases family. As to expression, expressed in roots. Expressed ubiquitously in various tissues.

The protein localises to the mitochondrion. The catalysed reaction is L-glutamate + NAD(+) + H2O = 2-oxoglutarate + NH4(+) + NADH + H(+). It catalyses the reaction L-glutamate + NADP(+) + H2O = 2-oxoglutarate + NH4(+) + NADPH + H(+). The polypeptide is Glutamate dehydrogenase 2, mitochondrial (GDH2) (Oryza sativa subsp. japonica (Rice)).